We begin with the raw amino-acid sequence, 553 residues long: Zinc finger CCHC domain-containing protein 8 homolog (553 aa).

Ser-59 carries the post-translational modification Phosphoserine. The CCHC-type zinc-finger motif lies at 183 to 200; sequence SSCFNCGDTEHSLRDCTK. Phosphoserine is present on residues Ser-292 and Ser-347. Phosphotyrosine is present on Tyr-356. The disordered stretch occupies residues 388–492; it reads LEEETEDPPL…APSTPFKASY (105 aa). Residues 395 to 409 show a composition bias toward pro residues; it reads PPLPPSVPPPQPPPP. Ser-421 and Ser-423 each carry phosphoserine. 2 stretches are compositionally biased toward polar residues: residues 444–456 and 473–485; these read ASHNTTANESKSP and ESGNNEQSRSAPS.

Belongs to the ZCCHC8 family.

The protein resides in the nucleus. It is found in the nucleoplasm. In terms of biological role, scaffolding subunit of the trimeric nuclear exosome targeting (NEXT) complex, a complex that directs a subset of non-coding short-lived RNAs for exosomal degradation. The RNA exosome is fundamental for the degradation of RNA in eukaryotic nuclei. May be involved in pre-mRNA splicing. This chain is Zinc finger CCHC domain-containing protein 8 homolog, found in Drosophila melanogaster (Fruit fly).